A 68-amino-acid polypeptide reads, in one-letter code: Sperm-associated antigen 11A (68 aa).

An N-terminal signal peptide occupies residues 1-19; sequence MKVLLLFAVFFCLVQRNSG. 3 cysteine pairs are disulfide-bonded: C30–C59, C37–C52, and C42–C60.

Belongs to the beta-defensin family. As to expression, only expressed in epididymis (middle part of the caput).

It is found in the secreted. Functionally, has antimicrobial activity against E.coli. Plays a role in the defense response in the male reproductive tract, contributing to sperm maturation, storage and protection. This chain is Sperm-associated antigen 11A, found in Rattus norvegicus (Rat).